Reading from the N-terminus, the 834-residue chain is Periplasmic nitrate reductase (834 aa).

The tat-type signal signal peptide spans Met1–Ala31. Residues Ile43–Asp99 form the 4Fe-4S Mo/W bis-MGD-type domain. Positions 50, 53, 57, and 85 each coordinate [4Fe-4S] cluster. Mo-bis(molybdopterin guanine dinucleotide)-binding positions include Lys87, Gln154, Asn179, Cys183, Trp216–Met223, Ser247–His251, Gly266–Asp268, Met377, Gln381, Asn487, Ser513–Asp514, Lys536, Asp563, and Thr723–Ser732. Position 799 (Trp799) interacts with substrate. Mo-bis(molybdopterin guanine dinucleotide) contacts are provided by Asn807 and Lys824.

This sequence belongs to the prokaryotic molybdopterin-containing oxidoreductase family. NasA/NapA/NarB subfamily. Component of the periplasmic nitrate reductase NapAB complex composed of NapA and NapB. Requires [4Fe-4S] cluster as cofactor. It depends on Mo-bis(molybdopterin guanine dinucleotide) as a cofactor. In terms of processing, predicted to be exported by the Tat system. The position of the signal peptide cleavage has not been experimentally proven.

The protein resides in the periplasm. The catalysed reaction is 2 Fe(II)-[cytochrome] + nitrate + 2 H(+) = 2 Fe(III)-[cytochrome] + nitrite + H2O. Catalytic subunit of the periplasmic nitrate reductase complex NapAB. Receives electrons from NapB and catalyzes the reduction of nitrate to nitrite. The chain is Periplasmic nitrate reductase from Rhizobium meliloti (strain 1021) (Ensifer meliloti).